The following is a 138-amino-acid chain: Bis(5'-nucleosyl)-tetraphosphatase [asymmetrical] (138 aa).

Residues 1–132 (MVVKAAGLVI…EMGSLLRKFS (132 aa)) form the Nudix hydrolase domain. A Nudix box motif is present at residues 37–58 (GHVDPGEDEWQAAIRETKEEAN).

It belongs to the Nudix hydrolase family. As to quaternary structure, monomer. Requires Mg(2+) as cofactor. The cofactor is Co(2+). Mn(2+) is required as a cofactor. Zn(2+) serves as cofactor. It depends on Ca(2+) as a cofactor.

It catalyses the reaction P(1),P(4)-bis(5'-adenosyl) tetraphosphate + H2O = AMP + ATP + 2 H(+). Its function is as follows. Asymmetrically hydrolyzes Ap4A to yield AMP and ATP. The polypeptide is Bis(5'-nucleosyl)-tetraphosphatase [asymmetrical] (ndx-4) (Caenorhabditis elegans).